A 610-amino-acid polypeptide reads, in one-letter code: UvrABC system protein C (610 aa).

Residues 16 to 94 (NQPGVYRMYN…IKQYLPKYNV (79 aa)) form the GIY-YIG domain. The 36-residue stretch at 204-239 (NQVLSILVEKMEQASRELRFEDAAKARDQIQAIRRV) folds into the UVR domain.

This sequence belongs to the UvrC family. In terms of assembly, interacts with UvrB in an incision complex.

The protein resides in the cytoplasm. In terms of biological role, the UvrABC repair system catalyzes the recognition and processing of DNA lesions. UvrC both incises the 5' and 3' sides of the lesion. The N-terminal half is responsible for the 3' incision and the C-terminal half is responsible for the 5' incision. The polypeptide is UvrABC system protein C (Vibrio cholerae serotype O1 (strain ATCC 39315 / El Tor Inaba N16961)).